Here is a 260-residue protein sequence, read N- to C-terminus: 2-amino-5-formylamino-6-ribosylaminopyrimidin-4(3H)-one 5'-monophosphate deformylase (260 aa).

Residues E33, H35, D44, and H112 each contribute to the Fe cation site.

The protein belongs to the creatininase superfamily. FAPy deformylase family. As to quaternary structure, homodimer. It depends on Fe(2+) as a cofactor. Requires Zn(2+) as cofactor.

It catalyses the reaction 2-amino-5-formylamino-6-(5-phospho-D-ribosylamino)pyrimidin-4(3H)-one + H2O = 2,5-diamino-6-(1-D-ribosylamino)pyrimidin-4(3H)-one 5'-phosphate + formate + H(+). The protein operates within cofactor biosynthesis; coenzyme F420 biosynthesis. It participates in cofactor biosynthesis; riboflavin biosynthesis. Functionally, catalyzes the hydrolysis of the formamide of 2-amino-5-formylamino-6-ribosylamino-4(3H)-pyrimidinone 5'-monophosphate (FAPy) to form 2,5-diamino-6-ribosylamino-4(3H)-pyrimidinone 5'-phosphate (APy). The polypeptide is 2-amino-5-formylamino-6-ribosylaminopyrimidin-4(3H)-one 5'-monophosphate deformylase (Methanococcus voltae (strain ATCC BAA-1334 / A3)).